A 457-amino-acid chain; its full sequence is Bifunctional protein GlmU (457 aa).

The segment at 1–228 (MEELVSVILA…SEEIIGVNSR (228 aa)) is pyrophosphorylase. UDP-N-acetyl-alpha-D-glucosamine contacts are provided by residues 9–12 (LAAG), Lys-23, Gln-73, and 78–79 (GT). A Mg(2+)-binding site is contributed by Asp-102. Gly-139, Glu-154, Asn-169, and Asn-226 together coordinate UDP-N-acetyl-alpha-D-glucosamine. Asn-226 contacts Mg(2+). Residues 229–249 (VQLSNAEKVMRRRINEKHMEN) form a linker region. Residues 250-457 (GVTIIDPDST…VEERIKKGRL (208 aa)) are N-acetyltransferase. 2 residues coordinate UDP-N-acetyl-alpha-D-glucosamine: Arg-331 and Lys-349. His-361 serves as the catalytic Proton acceptor. UDP-N-acetyl-alpha-D-glucosamine contacts are provided by Tyr-364 and Asn-375. Acetyl-CoA contacts are provided by residues 384–385 (NY), Ala-421, and Arg-438.

It in the N-terminal section; belongs to the N-acetylglucosamine-1-phosphate uridyltransferase family. This sequence in the C-terminal section; belongs to the transferase hexapeptide repeat family. Homotrimer. It depends on Mg(2+) as a cofactor.

The protein resides in the cytoplasm. It carries out the reaction alpha-D-glucosamine 1-phosphate + acetyl-CoA = N-acetyl-alpha-D-glucosamine 1-phosphate + CoA + H(+). It catalyses the reaction N-acetyl-alpha-D-glucosamine 1-phosphate + UTP + H(+) = UDP-N-acetyl-alpha-D-glucosamine + diphosphate. Its pathway is nucleotide-sugar biosynthesis; UDP-N-acetyl-alpha-D-glucosamine biosynthesis; N-acetyl-alpha-D-glucosamine 1-phosphate from alpha-D-glucosamine 6-phosphate (route II): step 2/2. It participates in nucleotide-sugar biosynthesis; UDP-N-acetyl-alpha-D-glucosamine biosynthesis; UDP-N-acetyl-alpha-D-glucosamine from N-acetyl-alpha-D-glucosamine 1-phosphate: step 1/1. The protein operates within bacterial outer membrane biogenesis; LPS lipid A biosynthesis. In terms of biological role, catalyzes the last two sequential reactions in the de novo biosynthetic pathway for UDP-N-acetylglucosamine (UDP-GlcNAc). The C-terminal domain catalyzes the transfer of acetyl group from acetyl coenzyme A to glucosamine-1-phosphate (GlcN-1-P) to produce N-acetylglucosamine-1-phosphate (GlcNAc-1-P), which is converted into UDP-GlcNAc by the transfer of uridine 5-monophosphate (from uridine 5-triphosphate), a reaction catalyzed by the N-terminal domain. This chain is Bifunctional protein GlmU, found in Caldanaerobacter subterraneus subsp. tengcongensis (strain DSM 15242 / JCM 11007 / NBRC 100824 / MB4) (Thermoanaerobacter tengcongensis).